Reading from the N-terminus, the 546-residue chain is Glutamyl-tRNA(Gln) amidotransferase subunit A, chloroplastic/mitochondrial (546 aa).

The tract at residues 21 to 52 (KRRRFHSSTPLFLSQPQTLASTDPPSSPPQSQ) is disordered. Polar residues predominate over residues 27–43 (SSTPLFLSQPQTLASTD). Residues K123 and S198 each act as charge relay system in the active site. The active-site Acyl-ester intermediate is S222.

The protein belongs to the amidase family. GatA subfamily. In terms of assembly, subunit of the heterotrimeric GatCAB amidotransferase (AdT) complex, composed of A, B and C subunits.

The protein localises to the mitochondrion. The protein resides in the plastid. It is found in the chloroplast stroma. The enzyme catalyses L-glutamyl-tRNA(Gln) + L-glutamine + ATP + H2O = L-glutaminyl-tRNA(Gln) + L-glutamate + ADP + phosphate + H(+). In terms of biological role, allows the formation of correctly charged Gln-tRNA(Gln) through the transamidation of misacylated Glu-tRNA(Gln) in chloroplasts and mitochondria. The reaction takes place in the presence of glutamine and ATP through an activated gamma-phospho-Glu-tRNA(Gln). In Vitis vinifera (Grape), this protein is Glutamyl-tRNA(Gln) amidotransferase subunit A, chloroplastic/mitochondrial.